A 410-amino-acid chain; its full sequence is Probable ATP-dependent RNA helicase MG308 (410 aa).

Positions 26–179 constitute a Helicase ATP-binding domain; sequence VFKLWPFQNI…KKQVINTKVI (154 aa). An ATP-binding site is contributed by 39 to 46; the sequence is AETGSGKT. The DEID box signature appears at 126–129; that stretch reads DEID. The region spanning 190–357 is the Helicase C-terminal domain; the sequence is LVKHFVVHLN…DLKFLTENNQ (168 aa).

Belongs to the DEAD box helicase family.

It carries out the reaction ATP + H2O = ADP + phosphate + H(+). This chain is Probable ATP-dependent RNA helicase MG308, found in Mycoplasma genitalium (strain ATCC 33530 / DSM 19775 / NCTC 10195 / G37) (Mycoplasmoides genitalium).